Here is a 387-residue protein sequence, read N- to C-terminus: Dual specificity mitogen-activated protein kinase kinase mek-2 (387 aa).

The tract at residues 1–37 is disordered; the sequence is MSSGKRRNPLGLSLPPTVNEQSESGEATAEEATATVP. Residues 16-25 are compositionally biased toward polar residues; it reads PTVNEQSESG. Over residues 26–35 the composition is skewed to low complexity; it reads EATAEEATAT. Positions 73–360 constitute a Protein kinase domain; that stretch reads LQTEGELGHG…LKSLTADVFF (288 aa). Residues 79–87 and lysine 102 contribute to the ATP site; that span reads LGHGNGGVV. Aspartate 195 functions as the Proton acceptor in the catalytic mechanism. 2 positions are modified to phosphoserine: serine 223 and serine 227.

Belongs to the protein kinase superfamily. STE Ser/Thr protein kinase family. MAP kinase kinase subfamily. Interacts with ksr-1.

It catalyses the reaction L-seryl-[protein] + ATP = O-phospho-L-seryl-[protein] + ADP + H(+). It carries out the reaction L-threonyl-[protein] + ATP = O-phospho-L-threonyl-[protein] + ADP + H(+). The catalysed reaction is L-tyrosyl-[protein] + ATP = O-phospho-L-tyrosyl-[protein] + ADP + H(+). Its activity is regulated as follows. Activated by tyrosine and threonine phosphorylation catalyzed by MAP kinase kinase kinases. Its function is as follows. Functions in the let-60 Ras signaling pathway; acts downstream of lin-45 raf kinase, but before the sur-1/mpk-1 gene product in controlling vulval cell differentiation. Required for progression of developing oocytes through the pachytene stage. Plays a role in responses to M.nematophilum-mediated bacterial infection by promoting tail swelling and preventing constipation. Involved in fluid homeostasis. Positively regulates lifespan upstream of mpk-1. The polypeptide is Dual specificity mitogen-activated protein kinase kinase mek-2 (mek-2) (Caenorhabditis elegans).